The chain runs to 257 residues: Enterotoxin type A (257 aa).

The N-terminal stretch at 1–27 (MKKTAFILLLFIALTWTTSPLVNGSEK) is a signal peptide. Residues C120 and C130 are joined by a disulfide bond. Zn(2+)-binding residues include H211, H249, and D251.

The protein belongs to the staphylococcal/streptococcal toxin family. In terms of assembly, monomer. Interacts with MHC class II molecules alpha/HLA-DRB1 and beta/HLA-DRA chains. The interaction with MHC-II molecules occurs at both zinc-dependent and zinc-independent sites. Interacts with T-cell receptor beta variable 7-9/TRBV7-9. Zn(2+) serves as cofactor.

It localises to the secreted. In terms of biological role, staphylococcal enterotoxin that activates the host immune system by binding as unprocessed molecules to major histocompatibility (MHC) complex class II and T-cell receptor (TCR) molecules. In turn, waves of cellular activation, cytokine production, and migration into the lung tissue and airways occur via alphabeta T-cells. Also causes the intoxication staphylococcal food poisoning syndrome. The illness is characterized by high fever, hypotension, diarrhea, shock, and in some cases death. The sequence is that of Enterotoxin type A (sea) from Staphylococcus aureus (strain Newman).